A 423-amino-acid chain; its full sequence is COP9 signalosome complex subunit 3 (423 aa).

In terms of domain architecture, PCI spans 197–365 (NFERALYFYE…GMVCFHDNPE (169 aa)). Positions 402–423 (QFVQKSMGSQEDDSGTKPSSYS) are disordered.

Belongs to the CSN3 family. As to quaternary structure, component of the CSN complex, probably composed of COPS1, COPS2, COPS3, COPS4, COPS5, COPS6, COPS7, COPS8 and COPS9.

Its subcellular location is the cytoplasm. It localises to the nucleus. Its function is as follows. Component of the COP9 signalosome complex (CSN), a complex involved in various cellular and developmental processes. The CSN complex is an essential regulator of the ubiquitin (Ubl) conjugation pathway by mediating the deneddylation of the cullin subunits of E3 ligase complexes, leading to modify the Ubl ligase activity. This Gallus gallus (Chicken) protein is COP9 signalosome complex subunit 3 (COPS3).